The sequence spans 214 residues: Imidazole glycerol phosphate synthase subunit HisH (214 aa).

In terms of domain architecture, Glutamine amidotransferase type-1 spans 2–214; sequence RVALIDYGSG…LIANFLRWAP (213 aa). Catalysis depends on Cys88, which acts as the Nucleophile. Active-site residues include His194 and Glu196.

In terms of assembly, heterodimer of HisH and HisF.

Its subcellular location is the cytoplasm. It catalyses the reaction 5-[(5-phospho-1-deoxy-D-ribulos-1-ylimino)methylamino]-1-(5-phospho-beta-D-ribosyl)imidazole-4-carboxamide + L-glutamine = D-erythro-1-(imidazol-4-yl)glycerol 3-phosphate + 5-amino-1-(5-phospho-beta-D-ribosyl)imidazole-4-carboxamide + L-glutamate + H(+). The enzyme catalyses L-glutamine + H2O = L-glutamate + NH4(+). Its pathway is amino-acid biosynthesis; L-histidine biosynthesis; L-histidine from 5-phospho-alpha-D-ribose 1-diphosphate: step 5/9. Its function is as follows. IGPS catalyzes the conversion of PRFAR and glutamine to IGP, AICAR and glutamate. The HisH subunit catalyzes the hydrolysis of glutamine to glutamate and ammonia as part of the synthesis of IGP and AICAR. The resulting ammonia molecule is channeled to the active site of HisF. The protein is Imidazole glycerol phosphate synthase subunit HisH of Rhodospirillum rubrum (strain ATCC 11170 / ATH 1.1.1 / DSM 467 / LMG 4362 / NCIMB 8255 / S1).